Reading from the N-terminus, the 348-residue chain is Adenosine deaminase (348 aa).

Positions 16 and 18 each coordinate Zn(2+). Substrate is bound by residues His18, Asp20, and Gly174. His201 provides a ligand contact to Zn(2+). Catalysis depends on Glu204, which acts as the Proton donor. Position 282 (Asp282) interacts with Zn(2+).

This sequence belongs to the metallo-dependent hydrolases superfamily. Adenosine and AMP deaminases family. Adenosine deaminase subfamily. Zn(2+) is required as a cofactor.

The enzyme catalyses adenosine + H2O + H(+) = inosine + NH4(+). It catalyses the reaction 2'-deoxyadenosine + H2O + H(+) = 2'-deoxyinosine + NH4(+). Catalyzes the hydrolytic deamination of adenosine and 2-deoxyadenosine. The protein is Adenosine deaminase of Clostridium kluyveri (strain ATCC 8527 / DSM 555 / NBRC 12016 / NCIMB 10680 / K1).